The following is a 576-amino-acid chain: Putative export ATP-binding/permease protein RF_0214 (576 aa).

Positions 20-303 (LIIVMISLLS…IFELLSEIHL (284 aa)) constitute an ABC transmembrane type-1 domain. Helical transmembrane passes span 21–41 (IIVM…GSVF), 61–81 (ILYI…RSYF), 135–155 (FLSF…LMFF), 158–178 (FKLA…LIKF), 242–262 (ALFF…VVWI), and 277–297 (IISF…IFEL). Residues 336–572 (IEFKNVDFTY…SEIYRNICRE (237 aa)) form the ABC transporter domain. An ATP-binding site is contributed by 371-378 (GRSGGGKS).

The protein belongs to the ABC transporter superfamily. In terms of assembly, homodimer.

Its subcellular location is the cell inner membrane. In terms of biological role, part of an ABC transporter complex. Transmembrane domains (TMD) form a pore in the inner membrane and the ATP-binding domain (NBD) is responsible for energy generation. This is Putative export ATP-binding/permease protein RF_0214 from Rickettsia felis (strain ATCC VR-1525 / URRWXCal2) (Rickettsia azadi).